The primary structure comprises 386 residues: Succinate--CoA ligase [ADP-forming] subunit beta (386 aa).

The region spanning 9–244 (KDLLTSYQLP…PSQENIRDVL (236 aa)) is the ATP-grasp domain. ATP contacts are provided by residues Lys46, 53–55 (GRG), Val102, and Glu107. Mg(2+)-binding residues include Asn199 and Asp213. Residues Asn264 and 321 to 323 (GIM) each bind substrate.

This sequence belongs to the succinate/malate CoA ligase beta subunit family. In terms of assembly, heterotetramer of two alpha and two beta subunits. The cofactor is Mg(2+).

It catalyses the reaction succinate + ATP + CoA = succinyl-CoA + ADP + phosphate. The catalysed reaction is GTP + succinate + CoA = succinyl-CoA + GDP + phosphate. The protein operates within carbohydrate metabolism; tricarboxylic acid cycle; succinate from succinyl-CoA (ligase route): step 1/1. Its function is as follows. Succinyl-CoA synthetase functions in the citric acid cycle (TCA), coupling the hydrolysis of succinyl-CoA to the synthesis of either ATP or GTP and thus represents the only step of substrate-level phosphorylation in the TCA. The beta subunit provides nucleotide specificity of the enzyme and binds the substrate succinate, while the binding sites for coenzyme A and phosphate are found in the alpha subunit. The sequence is that of Succinate--CoA ligase [ADP-forming] subunit beta from Chlamydia muridarum (strain MoPn / Nigg).